A 322-amino-acid polypeptide reads, in one-letter code: MRWQWRIYEEPLQEPLTTAQGVWRSRSGIYLRLEDEQGQVGYGEIAPLPGWGSETLNADIALCQQLPGHLTPEIMATIPEALPAAQFGFATAWQSVGRLPYRVRPWPICALLGSGQAALEQWQQSWQRGQTTFKWKVGVMSPEEEQAILKALLAALPPGAKLRLDANGSWDRATANRWFAWLDRHGNGKIEYVEQPLPPDQWQALLSLAQTVTTAIALDESVVSAAEVQRWVDRGWPGFFVIKTALFGDPDSLSLLLRRGLEPQRLVFSSALEGAIARTAIFHLLETWQPCHALGFGVDRWRSAPLLTTLTAYERLWERLDQ.

Lysine 136 functions as the Proton donor in the catalytic mechanism. Residues aspartate 165, glutamate 194, and aspartate 219 each coordinate Mg(2+). Residue lysine 243 is the Proton acceptor of the active site.

The protein belongs to the mandelate racemase/muconate lactonizing enzyme family. MenC type 1 subfamily. In terms of assembly, monomer. A divalent metal cation is required as a cofactor.

It catalyses the reaction (1R,6R)-6-hydroxy-2-succinyl-cyclohexa-2,4-diene-1-carboxylate = 2-succinylbenzoate + H2O. It participates in quinol/quinone metabolism; 1,4-dihydroxy-2-naphthoate biosynthesis; 1,4-dihydroxy-2-naphthoate from chorismate: step 4/7. Its pathway is cofactor biosynthesis; phylloquinone biosynthesis. In terms of biological role, converts 2-succinyl-6-hydroxy-2,4-cyclohexadiene-1-carboxylate (SHCHC) to 2-succinylbenzoate (OSB). Does not show N-succinylamino acid racemase (NSAR) activity with N-succinyl-L-phenylglycine as substrate. This chain is o-succinylbenzoate synthase, found in Thermosynechococcus vestitus (strain NIES-2133 / IAM M-273 / BP-1).